We begin with the raw amino-acid sequence, 523 residues long: Putative glycerol-3-phosphate transporter 1 (523 aa).

12 helical membrane passes run L29–Y49, V102–A122, I133–Y153, F163–A183, L196–A216, F228–V248, F306–F326, G344–I364, I368–F388, S402–V422, A444–I464, and G468–L488.

It belongs to the major facilitator superfamily. Organophosphate:Pi antiporter (OPA) (TC 2.A.1.4) family.

The protein resides in the membrane. The protein is Putative glycerol-3-phosphate transporter 1 of Arabidopsis thaliana (Mouse-ear cress).